We begin with the raw amino-acid sequence, 397 residues long: Flavohemoprotein (397 aa).

One can recognise a Globin domain in the interval 4 to 140; sequence SFSPHTITLI…IANLLKDREA (137 aa). His-87 contacts heme b. Residues Tyr-97 and Glu-139 each act as charge relay system in the active site. The interval 151-397 is reductase; it reads GGWIHWRRFV…FGPMDEEMAA (247 aa). Residues 154–258 form the FAD-binding FR-type domain; sequence IHWRRFVISK…TPPVGDFFLP (105 aa). FAD-binding positions include Tyr-192 and 207-210; that span reads RNYS. 271–276 contacts NADP(+); sequence GVGLTP. An FAD-binding site is contributed by 387–390; that stretch reads FFGP.

Belongs to the globin family. Two-domain flavohemoproteins subfamily. The protein in the C-terminal section; belongs to the flavoprotein pyridine nucleotide cytochrome reductase family. Requires heme b as cofactor. FAD is required as a cofactor.

The enzyme catalyses 2 nitric oxide + NADPH + 2 O2 = 2 nitrate + NADP(+) + H(+). It carries out the reaction 2 nitric oxide + NADH + 2 O2 = 2 nitrate + NAD(+) + H(+). Its function is as follows. Is involved in NO detoxification in an aerobic process, termed nitric oxide dioxygenase (NOD) reaction that utilizes O(2) and NAD(P)H to convert NO to nitrate, which protects the bacterium from various noxious nitrogen compounds. Therefore, plays a central role in the inducible response to nitrosative stress. In Xylella fastidiosa (strain 9a5c), this protein is Flavohemoprotein.